Here is a 105-residue protein sequence, read N- to C-terminus: Large ribosomal subunit protein bL21 (105 aa).

The protein belongs to the bacterial ribosomal protein bL21 family. In terms of assembly, part of the 50S ribosomal subunit. Contacts protein L20.

This protein binds to 23S rRNA in the presence of protein L20. The chain is Large ribosomal subunit protein bL21 from Rickettsia prowazekii (strain Madrid E).